The following is a 196-amino-acid chain: MGTSEEELKHIVIDLGCGPFFLGINDKHFPGFLNKQSNACAIVNTASRETGGVHWIAMGWHPPSNFYLFDPFGFSDKKLLQIYQFEYNALLKRSAITSSPDRCVQLFQNNESVQSPHSAACGLYCCMFLHAFANWPAHPFDNPTMDQLVGVPNNMLEAPRAQSIFKQNQETLYSFLHYNSSFFRRYENKLRKQTDP.

Residues H54, D70, and C121 contribute to the active site.

Belongs to the peptidase C5 family. In terms of assembly, interacts with protease cofactor pVI-C; this interaction is necessary for protease activation.

The protein resides in the virion. Its subcellular location is the host nucleus. It carries out the reaction Cleaves proteins of the adenovirus and its host cell at two consensus sites: -Yaa-Xaa-Gly-Gly-|-Xaa- and -Yaa-Xaa-Gly-Xaa-|-Gly- (in which Yaa is Met, Ile or Leu, and Xaa is any amino acid).. With respect to regulation, requires DNA and protease cofactor for maximal activation. Inside nascent virions, becomes partially activated by binding to the viral DNA, allowing it to cleave the cofactor that binds to the protease and fully activates it. Actin, like the viral protease cofactor, seems to act as a cofactor in the cleavage of cytokeratin 18 and of actin itself. Its function is as follows. Cleaves viral precursor proteins (pTP, pIIIa, pVI, pVII, pVIII, and pX) inside newly assembled particles giving rise to mature virions. Protease complexed to its cofactor slides along the viral DNA to specifically locate and cleave the viral precursors. Mature virions have a weakened organization compared to the unmature virions, thereby facilitating subsequent uncoating. Without maturation, the particle lacks infectivity and is unable to uncoat. Late in adenovirus infection, in the cytoplasm, may participate in the cytoskeleton destruction. Cleaves host cell cytoskeletal keratins K7 and K18. The protein is Protease of Bos taurus (Bovine).